The sequence spans 163 residues: Glycine cleavage system H protein, mitochondrial (163 aa).

The transit peptide at 1–34 (MALRMWASSAANALGVSCAPKSHLLPALSLSRCF) directs the protein to the mitochondrion. The 82-residue stretch at 56–137 (VATIGITDHA…YEEGWMVKVK (82 aa)) folds into the Lipoyl-binding domain. Lysine 96 carries the post-translational modification N6-lipoyllysine.

It belongs to the GcvH family. In terms of assembly, the glycine cleavage system is composed of four proteins: P, T, L and H. It depends on (R)-lipoate as a cofactor.

It is found in the mitochondrion. Functionally, the glycine cleavage system catalyzes the degradation of glycine. The H protein shuttles the methylamine group of glycine from the P protein to the T protein. This Mesembryanthemum crystallinum (Common ice plant) protein is Glycine cleavage system H protein, mitochondrial (GDCSH).